A 275-amino-acid polypeptide reads, in one-letter code: Shikimate dehydrogenase (NADP(+)) (275 aa).

Shikimate-binding positions include 19–21 (SIS) and Thr66. Lys70 functions as the Proton acceptor in the catalytic mechanism. 2 residues coordinate shikimate: Asn91 and Asp106. Residues 129-133 (GAGGA), 153-158 (NRTYGR), and Ile219 contribute to the NADP(+) site. A shikimate-binding site is contributed by Tyr221. Residue Gly242 participates in NADP(+) binding.

It belongs to the shikimate dehydrogenase family. Homodimer.

The catalysed reaction is shikimate + NADP(+) = 3-dehydroshikimate + NADPH + H(+). Its pathway is metabolic intermediate biosynthesis; chorismate biosynthesis; chorismate from D-erythrose 4-phosphate and phosphoenolpyruvate: step 4/7. Involved in the biosynthesis of the chorismate, which leads to the biosynthesis of aromatic amino acids. Catalyzes the reversible NADPH linked reduction of 3-dehydroshikimate (DHSA) to yield shikimate (SA). This is Shikimate dehydrogenase (NADP(+)) from Dictyoglomus thermophilum (strain ATCC 35947 / DSM 3960 / H-6-12).